The primary structure comprises 953 residues: Scaffold attachment factor B2 (953 aa).

The segment at 1-29 (MAETLPGSGDSGPGTASLGPGVAETGTRR) is disordered. The residue at position 2 (Ala-2) is an N-acetylalanine. The 35-residue stretch at 30–64 (LSELRVIDLRAELKKRNLDTGGNKSVLMERLKKAV) folds into the SAP domain. The residue at position 54 (Ser-54) is a Phosphoserine. A Glycyl lysine isopeptide (Lys-Gly) (interchain with G-Cter in SUMO1); alternate cross-link involves residue Lys-65. A Glycyl lysine isopeptide (Lys-Gly) (interchain with G-Cter in SUMO2); alternate cross-link involves residue Lys-65. The tract at residues 91-114 (KGLKMEEEGTEDNGLEDDSRDGQE) is disordered. Lys-94 is covalently cross-linked (Glycyl lysine isopeptide (Lys-Gly) (interchain with G-Cter in SUMO2)). Residues 98-114 (EGTEDNGLEDDSRDGQE) are compositionally biased toward acidic residues. Ser-109 and Ser-158 each carry phosphoserine. Residues Lys-188 and Lys-199 each participate in a glycyl lysine isopeptide (Lys-Gly) (interchain with G-Cter in SUMO2) cross-link. Thr-201 bears the Phosphothreonine mark. Ser-207 is subject to Phosphoserine. The segment at 219–404 (ILGETCKSEP…KDEKGRVGSG (186 aa)) is disordered. Residues 224 to 233 (CKSEPVKEES) are compositionally biased toward basic and acidic residues. Lys-230 participates in a covalent cross-link: Glycyl lysine isopeptide (Lys-Gly) (interchain with G-Cter in SUMO). Positions 274–285 (SESTAHAQSSKA) are enriched in polar residues. A compositionally biased stretch (basic and acidic residues) spans 292-308 (VKREPAEQPGDGERTDC). Residue Lys-293 forms a Glycyl lysine isopeptide (Lys-Gly) (interchain with G-Cter in SUMO) linkage. Over residues 318 to 329 (EQSSAASELAEA) the composition is skewed to low complexity. Basic and acidic residues predominate over residues 345–358 (EARDSKEDGRKFDF). Positions 370-382 (ESSTSEGADQKMS) are enriched in polar residues. Residues Lys-380, Lys-385, Lys-388, Lys-391, and Lys-395 each participate in a glycyl lysine isopeptide (Lys-Gly) (interchain with G-Cter in SUMO2) cross-link. The span at 383-400 (SFKEEKDIKPIIKDEKGR) shows a compositional bias: basic and acidic residues. Residues 407-485 (RNLWVSGLSS…RMISVEKAKN (79 aa)) enclose the RRM domain. Phosphoserine is present on residues Ser-507 and Ser-513. Residues Lys-517, Lys-524, Lys-525, Lys-541, Lys-542, and Lys-551 each participate in a glycyl lysine isopeptide (Lys-Gly) (interchain with G-Cter in SUMO2) cross-link. A compositionally biased stretch (basic and acidic residues) spans 525-551 (KEEKIEKKEEKKPEDIKKEEKDQDELK). Disordered regions lie at residues 525-665 (KEEK…RLQR) and 684-953 (RERL…TRRY). Residues 555 to 564 (TNRSRVTKSG) are compositionally biased toward polar residues. Residues 567 to 579 (GMERTVVMDKSKG) show a composition bias toward basic and acidic residues. Residues Lys-578, Lys-586, and Lys-608 each participate in a glycyl lysine isopeptide (Lys-Gly) (interchain with G-Cter in SUMO2) cross-link. Basic and acidic residues-rich tracts occupy residues 590–665 (RSKE…RLQR) and 684–820 (RERL…DSRD). The tract at residues 600–953 (DRKSESKEKR…PPYPHFTRRY (354 aa)) is interaction with SAFB1. Lys-616 is covalently cross-linked (Glycyl lysine isopeptide (Lys-Gly) (interchain with G-Cter in SUMO2); alternate). At Lys-616 the chain carries N6-acetyllysine; alternate. The Nuclear localization signal signature appears at 713–730 (RRQQEQLRYEQERRPGRR). Ser-787 and Ser-832 each carry phosphoserine. A compositionally biased stretch (basic and acidic residues) spans 843-859 (GGRDWGEHNQRLEEHQA). Over residues 881–890 (GERGLSGPSG) the composition is skewed to gly residues. Ser-886 is subject to Phosphoserine. Omega-N-methylarginine occurs at positions 897 and 903. Residues 899–927 (GVAGRGGFAQGGHSQGHVVPGGGLEGGGV) are compositionally biased toward gly residues.

Interacts with SAFB/SAFB1 and SCAM1. Interacts with isoform 2 SRPK1 and inhibits its activity. In terms of tissue distribution, expressed at high levels in the CNS and at low levels in the liver. Expressed in a wide number of breast cancer cell lines.

It localises to the cytoplasm. Its subcellular location is the nucleus. Its function is as follows. Binds to scaffold/matrix attachment region (S/MAR) DNA. Can function as an estrogen receptor corepressor and can also inhibit cell proliferation. The chain is Scaffold attachment factor B2 (SAFB2) from Homo sapiens (Human).